Reading from the N-terminus, the 275-residue chain is Mitochondrial fission factor homolog A (275 aa).

The Cytoplasmic segment spans residues 1–255; that stretch reads MAEVNRIHYE…ENKERAKREM (255 aa). Positions 100 to 171 are disordered; that stretch reads DFLEPEPAAN…PLISPEDSQN (72 aa). The segment covering 114 to 130 has biased composition (basic and acidic residues); sequence PREEMKSHFRSRREQCR. The segment covering 131-142 has biased composition (polar residues); the sequence is SENSTMRRNGQI. A coiled-coil region spans residues 223-253; that stretch reads LTDAASLRRQIIKLNRRLQLLEHENKERAKR. A helical; Anchor for type IV membrane protein membrane pass occupies residues 256–273; the sequence is VMYSLTVAFWLVNSWIWL. Residues 274 to 275 lie on the Extracellular side of the membrane; it reads RR.

The protein belongs to the Tango11 family.

The protein localises to the mitochondrion outer membrane. It is found in the peroxisome. Functionally, plays a role in mitochondrial and peroxisomal fission. Promotes the recruitment and association of the fission mediator dynamin-related protein 1 (DNM1L) to the mitochondrial surface. This is Mitochondrial fission factor homolog A from Danio rerio (Zebrafish).